Here is a 166-residue protein sequence, read N- to C-terminus: UPF0134 protein MPN_138 (166 aa).

Belongs to the UPF0134 family.

The chain is UPF0134 protein MPN_138 from Mycoplasma pneumoniae (strain ATCC 29342 / M129 / Subtype 1) (Mycoplasmoides pneumoniae).